The sequence spans 103 residues: Omega toxin Ap5 (103 aa).

Residues 1–22 (MNTIQVILFAVVLVLTVTVGQA) form the signal peptide. Residues 23-57 (DEDSAETSLLRKLEEAEASMFGQYLEESKNSREKR) constitute a propeptide that is removed on maturation. 3 disulfide bridges follow: Cys-58–Cys-73, Cys-65–Cys-78, and Cys-72–Cys-93.

This sequence belongs to the neurotoxin 14 (magi-1) family. 08 (Ltx-4) subfamily. As to expression, expressed by the venom duct.

It localises to the secreted. Functionally, shows a weak inhibition on the voltage-gated calcium channel Cav2.1/CACNA1A and some voltage-gated sodium channels (with 1 uM toxin tested: 22.08% inhibition on Cav2.1/CACNA1A, 6.6% on Nav1.1/SCN1A, 4.2% on Nav1.5, and 16% on Nav1.7). Its function is as follows. Shows a weak inhibition on the voltage-gated calcium channel Cav2.1/CACNA1A (28.06% at 1 uM). The polypeptide is Omega toxin Ap5 (Acanthoscurria paulensis (Brazilian giant black tarantula spider)).